A 637-amino-acid polypeptide reads, in one-letter code: Chaperone protein HtpG (637 aa).

The a; substrate-binding stretch occupies residues 1-345; the sequence is MSQQETHGFQ…SNDLPLNVSR (345 aa). The tract at residues 346 to 562 is b; that stretch reads EILQDNHVTK…EGEMSTQMIK (217 aa). The tract at residues 563–637 is c; sequence LMQAAGQPVP…MNQMLLANMK (75 aa).

Belongs to the heat shock protein 90 family. As to quaternary structure, homodimer.

It localises to the cytoplasm. Its function is as follows. Molecular chaperone. Has ATPase activity. The polypeptide is Chaperone protein HtpG (Shewanella baltica (strain OS185)).